We begin with the raw amino-acid sequence, 441 residues long: Ribulose bisphosphate carboxylase large chain (441 aa).

N89 and T139 together coordinate substrate. K141 acts as the Proton acceptor in catalysis. Residue K143 coordinates substrate. Mg(2+) is bound by residues K167, D169, and E170. K167 is subject to N6-carboxylysine. Catalysis depends on H260, which acts as the Proton acceptor. 3 residues coordinate substrate: R261, H293, and S345.

Belongs to the RuBisCO large chain family. Type I subfamily. As to quaternary structure, heterohexadecamer of 8 large chains and 8 small chains; disulfide-linked. The disulfide link is formed within the large subunit homodimers. Requires Mg(2+) as cofactor. In terms of processing, the disulfide bond which can form in the large chain dimeric partners within the hexadecamer appears to be associated with oxidative stress and protein turnover.

It localises to the plastid. Its subcellular location is the chloroplast. The catalysed reaction is 2 (2R)-3-phosphoglycerate + 2 H(+) = D-ribulose 1,5-bisphosphate + CO2 + H2O. The enzyme catalyses D-ribulose 1,5-bisphosphate + O2 = 2-phosphoglycolate + (2R)-3-phosphoglycerate + 2 H(+). In terms of biological role, ruBisCO catalyzes two reactions: the carboxylation of D-ribulose 1,5-bisphosphate, the primary event in carbon dioxide fixation, as well as the oxidative fragmentation of the pentose substrate in the photorespiration process. Both reactions occur simultaneously and in competition at the same active site. This Fouquieria splendens (Ocotillo) protein is Ribulose bisphosphate carboxylase large chain.